Reading from the N-terminus, the 565-residue chain is Adenine deaminase (565 aa).

The protein belongs to the metallo-dependent hydrolases superfamily. Adenine deaminase family. The cofactor is Mn(2+).

It catalyses the reaction adenine + H2O + H(+) = hypoxanthine + NH4(+). In Sinorhizobium fredii (strain NBRC 101917 / NGR234), this protein is Adenine deaminase.